A 449-amino-acid chain; its full sequence is RNA binding protein fox-1 homolog 2 (449 aa).

Over residues 1-21 (MAEGGQAQQQPPQLGPGAAAR) the composition is skewed to low complexity. A disordered region spans residues 1–186 (MAEGGQAQQQ…STPKRLHVSN (186 aa)). Polar residues-rich tracts occupy residues 77–86 (QGNQEPTTTP) and 118–138 (YAGQ…PHGE). The span at 139 to 176 (QSSNSPSNQNGSLTQTEGGAQTDGQQSQTQSSENSESK) shows a compositional bias: low complexity. The region spanning 180–256 (KRLHVSNIPF…RKIEVNNATA (77 aa)) is the RRM domain. Omega-N-methylarginine occurs at positions 236, 241, 268, and 273. Glutamate 285 and proline 317 each carry asymmetric dimethylarginine. Residues leucine 318, leucine 323, alanine 336, arginine 340, and glycine 341 each carry the omega-N-methylarginine modification. An asymmetric dimethylarginine mark is found at arginine 356 and arginine 388. Residues arginine 440 and arginine 445 each carry the asymmetric dimethylarginine; alternate modification. 2 positions are modified to omega-N-methylarginine; alternate: arginine 440 and arginine 445.

Interacts with ER-alpha N-terminal activation domain. Interacts with RBPMS; the interaction allows cooperative assembly of stable cell-specific alternative splicing regulatory complexes. As to expression, detected in brain neurons (at protein level). Detected in heart, brain, embryo, lung, liver, kidney and ovary.

The protein resides in the nucleus. Its subcellular location is the cytoplasm. In terms of biological role, RNA-binding protein that regulates alternative splicing events by binding to 5'-UGCAUGU-3' elements. Prevents binding of U2AF2 to the 3'-splice site. Regulates alternative splicing of tissue-specific exons and of differentially spliced exons during erythropoiesis. Seems to act as a coregulatory factor of ER-alpha. Together with RNA binding proteins RBPMS and MBNL1/2, activates vascular smooth muscle cells alternative splicing events. The sequence is that of RNA binding protein fox-1 homolog 2 (Rbfox2) from Mus musculus (Mouse).